The chain runs to 262 residues: MSTTSVIPKHWVDKGPWPIMTTPQGEGQDTNSHYSVFLATDMCHVHNLFIRAMNSVYLQCPYVTDQADIADLLFYTKTLVITIDAHHDSEEKYLFPELAAYTKNPKIMAVNQAQHAAFHGGLEKLGEYCTTTSPADYSSVTFRAMIDSFAPQLFKHLNDEIPTILALKQYPSEDLKTIWTKTEQHIDDVGSFDEMFPLAFGCMDKGFEAGQHKFPPAPFFMEYVVRYWFARKHSGAWRFNPCDMRGNPRQLLFIPTEEDQKP.

The interval 69 to 160 is hemerythrin-like; the sequence is IADLLFYTKT…PQLFKHLNDE (92 aa).

Its pathway is secondary metabolite biosynthesis. Part of the gene cluster that mediates the biosynthesis of the dimeric xanthones cryptosporioptides. The pathway begins with the synthesis of atrochrysone thioester by the polyketide synthase dmx-nrPKS. The atrochrysone carboxyl ACP thioesterase dmxR1 then breaks the thioester bond and releases the atrochrysone carboxylic acid from dmx-nrPKS. Atrochrysone carboxylic acid is decarboxylated by the decarboxylase dmxR15, and oxidized by the anthrone oxygenase dmxR16 to yield emodin. Emodin is then reduced to emodin hydroquinone by the oxidoreductase dmxR7. A-ring reduction by the short chain dehydrogenase dmxR18, dehydration by the scytalone dehydratase-like protein dmxR17 and probable spontaneous re-oxidation, results in overall deoxygenation to chrysophanol. Baeyer-Villiger oxidation by the Baeyer-Villiger monooxygenase (BVMO) dmxR6 then yields monodictylactone in equilibrium with monodictyphenone. In the case of the cryptosporioptides biosynthesis, monodictylactone is reduced at C-12 to an alcohol (by the short chain dehydrogenases dmxR12 or dmxR8) and hydroxylated at C-5 by dmxR9, yielding the electron-rich aromatic which could eliminate H(2)O to form the ortho-quinonemethide, followed by tautomerisation to paraquinone and complete the formal reduction to produce the 10-methylgroup. Conjugate addition of C-4a-OH to the resulting paraquinone by the monooxygenase dmxR10 then gives cyclohexadienone, which is then reduced at C-5 by the short chain dehydrogenase dmxR3 to give the dihydroxanthone. The 6,7-epoxide in the cryptosporioptides could be introduced by the cytochrome P450 monooxygenase dmxL3. The highly reducing PKS dmxL2 manufactures butyrate, which is further carboxylated by dmxL1 to form ethylmalonate. It is not yet clear whether the carboxylation occurs while the butyrate is attached to the ACP of dmxL2, but this unusual fungal metabolite could then be esterified to O-5 by the O-acetyltransferase dmxR13. Finally, dimerization performed by dmxR5 gives the observed dimers cryptosporioptides A, B and C as the final products of the pathway. The polypeptide is Dimeric xanthone biosynthesis cluster protein R11 (Cryptosporiopsis sp. (strain 8999)).